The following is a 1434-amino-acid chain: Probable ATP-dependent DNA helicase HFM1 (1434 aa).

The 188-residue stretch at 289–476 (DDLLYTDRNF…WLSDGERPAV (188 aa)) folds into the Helicase ATP-binding domain. ATP is bound at residue 302–309 (APTGSGKT). Positions 410–413 (DEVH) match the DEAH box motif. The 205-residue stretch at 514-718 (KVYSVIRTYS…DVNIALDWIR (205 aa)) folds into the Helicase C-terminal domain. One can recognise an SEC63 domain in the interval 775–1089 (PTEAGRLMAW…VGLDIHQKFT (315 aa)). The segment at 1110 to 1130 (TDISHSDYSGRATATGSSKGM) is disordered. The segment at 1141–1156 (CHHHCKNKHACGHDCC) adopts a C4-type zinc-finger fold. A disordered region spans residues 1294–1333 (GFGDTRDSSLGGSKLPFQKSSSRFQRDNSNSFASSPGKPD). The span at 1311–1327 (QKSSSRFQRDNSNSFAS) shows a compositional bias: polar residues.

Belongs to the helicase family. SKI2 subfamily. The cofactor is Zn(2+).

The enzyme catalyses Couples ATP hydrolysis with the unwinding of duplex DNA by translocating in the 3'-5' direction.. It carries out the reaction ATP + H2O = ADP + phosphate + H(+). Functionally, required for crossover formation and complete synapsis of homologous chromosomes during meiosis. The sequence is that of Probable ATP-dependent DNA helicase HFM1 from Mus musculus (Mouse).